The sequence spans 258 residues: Short-chain dehydrogenase/reductase aba4 (258 aa).

Residues Ile-20, Asp-66, and Lys-130 each coordinate NADP(+). Catalysis depends on proton donor residues Ser-146 and Tyr-160. NADP(+) is bound by residues Tyr-160, Lys-164, Ile-193, and Thr-195. The Lowers pKa of active site Tyr role is filled by Lys-164.

This sequence belongs to the short-chain dehydrogenases/reductases (SDR) family.

The protein operates within hormone biosynthesis. Short-chain dehydrogenase/reductase; part of the gene cluster that mediates the biosynthesis of abscisic acid (ABA), a phytohormone that acts antagonistically toward salicylic acid (SA), jasmonic acid (JA) and ethylene (ETH) signaling, to impede plant defense responses. The first step of the pathway catalyzes the reaction from farnesyl diphosphate to alpha-ionylideneethane performed by the alpha-ionylideneethane synthase aba3 via a three-step reaction mechanism involving 2 neutral intermediates, beta-farnesene and allofarnesene. The cytochrome P450 monooxygenase aba1 might then be involved in the conversion of alpha-ionylideneethane to alpha-ionylideneacetic acid. Alpha-ionylideneacetic acid is further converted to abscisic acid in 2 steps involving the cytochrome P450 monooxygenase aba2 and the short-chain dehydrogenase/reductase aba4, via the intermediates 1'-deoxy-ABA or 1',4'-trans-diol-ABA, depending on the order of action of these 2 enzymes. Aba2 is responsible for the hydroxylation of carbon atom C-1' and aba4 might be involved in the oxidation of the C-4' carbon atom. The protein is Short-chain dehydrogenase/reductase aba4 of Botryotinia fuckeliana (strain B05.10) (Noble rot fungus).